The primary structure comprises 182 residues: MQTEHVILLNAQGVPTGTLEKYAAHTADTLLHLAFSSWLFNAKGQLLVTRRALSKKAWPGVWTNSVCGHPQLGESSEDAVIRRCRYELGVEITPPESIYPDFRYRATDPRGIVENEVCPVFAARTTSALQINDDEVMDYQWCDLADVLRGIDATPWAFSPWMVMQATNREARIRLSAFTQLK.

Histidine 25 and histidine 32 together coordinate Mn(2+). The Nudix hydrolase domain maps to 30–164 (LLHLAFSSWL…PWAFSPWMVM (135 aa)). Cysteine 67 is a catalytic residue. Histidine 69 is a Mn(2+) binding site. Mg(2+) is bound at residue glutamate 87. Positions 114 and 116 each coordinate Mn(2+). Residue glutamate 116 is part of the active site.

It belongs to the IPP isomerase type 1 family. As to quaternary structure, homodimer. The cofactor is Mg(2+). It depends on Mn(2+) as a cofactor.

It is found in the cytoplasm. It catalyses the reaction isopentenyl diphosphate = dimethylallyl diphosphate. Its pathway is isoprenoid biosynthesis; dimethylallyl diphosphate biosynthesis; dimethylallyl diphosphate from isopentenyl diphosphate: step 1/1. Functionally, catalyzes the 1,3-allylic rearrangement of the homoallylic substrate isopentenyl (IPP) to its highly electrophilic allylic isomer, dimethylallyl diphosphate (DMAPP). The protein is Isopentenyl-diphosphate Delta-isomerase of Shigella flexneri serotype 5b (strain 8401).